We begin with the raw amino-acid sequence, 308 residues long: GTP cyclohydrolase FolE2 (308 aa).

Belongs to the GTP cyclohydrolase IV family.

It catalyses the reaction GTP + H2O = 7,8-dihydroneopterin 3'-triphosphate + formate + H(+). The protein operates within cofactor biosynthesis; 7,8-dihydroneopterin triphosphate biosynthesis; 7,8-dihydroneopterin triphosphate from GTP: step 1/1. In terms of biological role, converts GTP to 7,8-dihydroneopterin triphosphate. The protein is GTP cyclohydrolase FolE2 of Idiomarina loihiensis (strain ATCC BAA-735 / DSM 15497 / L2-TR).